We begin with the raw amino-acid sequence, 1161 residues long: DNA-directed RNA polymerase subunit beta (1161 aa).

The protein belongs to the RNA polymerase beta chain family. In terms of assembly, the RNAP catalytic core consists of 2 alpha, 1 beta, 1 beta' and 1 omega subunit. When a sigma factor is associated with the core the holoenzyme is formed, which can initiate transcription.

The catalysed reaction is RNA(n) + a ribonucleoside 5'-triphosphate = RNA(n+1) + diphosphate. DNA-dependent RNA polymerase catalyzes the transcription of DNA into RNA using the four ribonucleoside triphosphates as substrates. This chain is DNA-directed RNA polymerase subunit beta, found in Streptomyces avermitilis (strain ATCC 31267 / DSM 46492 / JCM 5070 / NBRC 14893 / NCIMB 12804 / NRRL 8165 / MA-4680).